The chain runs to 288 residues: Thymidylate synthase (288 aa).

DUMP contacts are provided by residues Arg21 and 150–151 (RR). Cys170 acts as the Nucleophile in catalysis. Residues 190–193 (RSGD), Asn201, and 231–233 (HIY) each bind dUMP. Residue Asp193 coordinates (6R)-5,10-methylene-5,6,7,8-tetrahydrofolate. Ala287 is a (6R)-5,10-methylene-5,6,7,8-tetrahydrofolate binding site.

This sequence belongs to the thymidylate synthase family. Bacterial-type ThyA subfamily. As to quaternary structure, homodimer.

The protein resides in the cytoplasm. It carries out the reaction dUMP + (6R)-5,10-methylene-5,6,7,8-tetrahydrofolate = 7,8-dihydrofolate + dTMP. Its pathway is pyrimidine metabolism; dTTP biosynthesis. Functionally, catalyzes the reductive methylation of 2'-deoxyuridine-5'-monophosphate (dUMP) to 2'-deoxythymidine-5'-monophosphate (dTMP) while utilizing 5,10-methylenetetrahydrofolate (mTHF) as the methyl donor and reductant in the reaction, yielding dihydrofolate (DHF) as a by-product. This enzymatic reaction provides an intracellular de novo source of dTMP, an essential precursor for DNA biosynthesis. In Acholeplasma laidlawii (strain PG-8A), this protein is Thymidylate synthase.